We begin with the raw amino-acid sequence, 700 residues long: ABC transporter B family member 26, chloroplastic (700 aa).

A chloroplast-targeting transit peptide spans 1-59; it reads MAQQVLGCTSRPIRVSLHRCSVITTSDTIRRKNLRFVRNPRLSFSLQSSTRNYRLPSIN. Transmembrane regions (helical) follow at residues 137-157, 182-202, and 268-288; these read WVIF…ITIP, LVTL…FFGI, and LIYL…ICCI. Residues 139–421 enclose the ABC transmembrane type-1 domain; that stretch reads IFAAFSTLIV…VGDNLSSLMQ (283 aa). The 240-residue stretch at 455–694 folds into the ABC transporter domain; sequence IEFVDVSFSY…DGLYARLTKR (240 aa). 490–497 lines the ATP pocket; that stretch reads GLSGSGKS.

The protein belongs to the ABC transporter superfamily. ABCB family. Multidrug resistance exporter (TC 3.A.1.201) subfamily.

It localises to the plastid. Its subcellular location is the chloroplast membrane. In Arabidopsis thaliana (Mouse-ear cress), this protein is ABC transporter B family member 26, chloroplastic (ABCB26).